The following is a 109-amino-acid chain: Set1 complex component sdc1 (109 aa).

Positions 49 to 109 are disordered; the sequence is QQKQKEIVNQ…SSNPGKNSAS (61 aa). Residues 73–87 are compositionally biased toward polar residues; it reads STPTMAEQVQTSFSN. Positions 88 to 101 are enriched in low complexity; that stretch reads PASTPLTQTSSPSS.

It belongs to the dpy-30 family. Component of the COMPASS (Set1C) complex composed of ash2, sdc1, set1, shg1, spp1, swd1, swd2 and swd3. Component of the Lid2 complex composed of ash2, jmj3, lid2, sdc1 and snt2.

Its subcellular location is the nucleus. Functionally, the COMPASS (Set1C) complex specifically mono-, di- and trimethylates histone H3 to form H3K4me1/2/3, which subsequently activates gene expression by regulating transcription elongation and plays a role in telomere length maintenance. This Schizosaccharomyces pombe (strain 972 / ATCC 24843) (Fission yeast) protein is Set1 complex component sdc1 (sdc1).